A 227-amino-acid chain; its full sequence is Cytochrome c oxidase subunit 2 (227 aa).

The Mitochondrial intermembrane portion of the chain corresponds to 1–14 (MAYPLQMGLQDATS). The chain crosses the membrane as a helical span at residues 15–45 (PIMEELLHFHDHTLMIVFLISSLVLYIISLM). The Mitochondrial matrix segment spans residues 46–59 (LTTKLTHTSTMDAQ). Residues 60 to 87 (EVETVWTILPAIILILIALPSLRILYMM) traverse the membrane as a helical segment. Over 88 to 227 (DEINNPSLTV…HFEKWSTSML (140 aa)) the chain is Mitochondrial intermembrane. The Cu cation site is built by His161, Cys196, Glu198, Cys200, His204, and Met207. Glu198 contributes to the Mg(2+) binding site.

It belongs to the cytochrome c oxidase subunit 2 family. As to quaternary structure, component of the cytochrome c oxidase (complex IV, CIV), a multisubunit enzyme composed of 14 subunits. The complex is composed of a catalytic core of 3 subunits MT-CO1, MT-CO2 and MT-CO3, encoded in the mitochondrial DNA, and 11 supernumerary subunits COX4I, COX5A, COX5B, COX6A, COX6B, COX6C, COX7A, COX7B, COX7C, COX8 and NDUFA4, which are encoded in the nuclear genome. The complex exists as a monomer or a dimer and forms supercomplexes (SCs) in the inner mitochondrial membrane with NADH-ubiquinone oxidoreductase (complex I, CI) and ubiquinol-cytochrome c oxidoreductase (cytochrome b-c1 complex, complex III, CIII), resulting in different assemblies (supercomplex SCI(1)III(2)IV(1) and megacomplex MCI(2)III(2)IV(2)). Found in a complex with TMEM177, COA6, COX18, COX20, SCO1 and SCO2. Interacts with TMEM177 in a COX20-dependent manner. Interacts with COX20. Interacts with COX16. It depends on Cu cation as a cofactor.

Its subcellular location is the mitochondrion inner membrane. It carries out the reaction 4 Fe(II)-[cytochrome c] + O2 + 8 H(+)(in) = 4 Fe(III)-[cytochrome c] + 2 H2O + 4 H(+)(out). Functionally, component of the cytochrome c oxidase, the last enzyme in the mitochondrial electron transport chain which drives oxidative phosphorylation. The respiratory chain contains 3 multisubunit complexes succinate dehydrogenase (complex II, CII), ubiquinol-cytochrome c oxidoreductase (cytochrome b-c1 complex, complex III, CIII) and cytochrome c oxidase (complex IV, CIV), that cooperate to transfer electrons derived from NADH and succinate to molecular oxygen, creating an electrochemical gradient over the inner membrane that drives transmembrane transport and the ATP synthase. Cytochrome c oxidase is the component of the respiratory chain that catalyzes the reduction of oxygen to water. Electrons originating from reduced cytochrome c in the intermembrane space (IMS) are transferred via the dinuclear copper A center (CU(A)) of subunit 2 and heme A of subunit 1 to the active site in subunit 1, a binuclear center (BNC) formed by heme A3 and copper B (CU(B)). The BNC reduces molecular oxygen to 2 water molecules using 4 electrons from cytochrome c in the IMS and 4 protons from the mitochondrial matrix. The polypeptide is Cytochrome c oxidase subunit 2 (MT-CO2) (Halichoerus grypus (Gray seal)).